A 405-amino-acid polypeptide reads, in one-letter code: Acetate kinase (405 aa).

Asn-7 provides a ligand contact to Mg(2+). Lys-14 is an ATP binding site. Arg-99 is a substrate binding site. Catalysis depends on Asp-156, which acts as the Proton donor/acceptor. Residues His-215 to Gly-219, Asp-290 to Arg-292, and Gly-338 to His-342 contribute to the ATP site. Residue Glu-391 participates in Mg(2+) binding.

The protein belongs to the acetokinase family. As to quaternary structure, homodimer. Mg(2+) is required as a cofactor. Mn(2+) serves as cofactor.

It localises to the cytoplasm. It catalyses the reaction acetate + ATP = acetyl phosphate + ADP. Its pathway is metabolic intermediate biosynthesis; acetyl-CoA biosynthesis; acetyl-CoA from acetate: step 1/2. Functionally, catalyzes the formation of acetyl phosphate from acetate and ATP. Can also catalyze the reverse reaction. This is Acetate kinase from Nostoc punctiforme (strain ATCC 29133 / PCC 73102).